Consider the following 252-residue polypeptide: MLLLFDVGNTHTTVALTRDGKMFEKYRISTKKYETEDELYVFLKSLYGGTVIEGIATVVSSVVPSLNIVFEYFANKYGDGNVYFVSSTDYNKIVWNINYPKELGADRVCDVIAAYKEYGKDCIIIDYGTAITIDVLKDGVYEGGVIMPGFAMMINALFKGTAKLPLVEVKPYDGFIGKDTESNIRIGTINATVGAIKYVVENITKEYNTPPVIIHTGGHALYVQKIVDGVVDRDLTLRGMYYFYEEKKNSAC.

Position 6–13 (6–13 (DVGNTHTT)) interacts with ATP. 104 to 107 (GADR) provides a ligand contact to substrate. Catalysis depends on Asp106, which acts as the Proton acceptor. A K(+)-binding site is contributed by Asp126. Position 129 (Thr129) interacts with ATP. Thr180 serves as a coordination point for substrate.

Belongs to the type III pantothenate kinase family. Homodimer. NH4(+) serves as cofactor. Requires K(+) as cofactor.

It localises to the cytoplasm. It carries out the reaction (R)-pantothenate + ATP = (R)-4'-phosphopantothenate + ADP + H(+). The protein operates within cofactor biosynthesis; coenzyme A biosynthesis; CoA from (R)-pantothenate: step 1/5. In terms of biological role, catalyzes the phosphorylation of pantothenate (Pan), the first step in CoA biosynthesis. The polypeptide is Type III pantothenate kinase (Fervidobacterium nodosum (strain ATCC 35602 / DSM 5306 / Rt17-B1)).